The chain runs to 213 residues: Octanoyltransferase (213 aa).

One can recognise a BPL/LPL catalytic domain in the interval 35-213; sequence DKHGDAVLLL…ERHLPTLVGA (179 aa). Residues 73–80, 145–147, and 158–160 each bind substrate; these read RGGKITWH, AIG, and GFS. The active-site Acyl-thioester intermediate is Cys-176.

It belongs to the LipB family.

The protein resides in the cytoplasm. It carries out the reaction octanoyl-[ACP] + L-lysyl-[protein] = N(6)-octanoyl-L-lysyl-[protein] + holo-[ACP] + H(+). It participates in protein modification; protein lipoylation via endogenous pathway; protein N(6)-(lipoyl)lysine from octanoyl-[acyl-carrier-protein]: step 1/2. In terms of biological role, catalyzes the transfer of endogenously produced octanoic acid from octanoyl-acyl-carrier-protein onto the lipoyl domains of lipoate-dependent enzymes. Lipoyl-ACP can also act as a substrate although octanoyl-ACP is likely to be the physiological substrate. The protein is Octanoyltransferase of Salinispora arenicola (strain CNS-205).